Here is a 79-residue protein sequence, read N- to C-terminus: Sec-independent protein translocase protein TatA (79 aa).

The helical transmembrane segment at 1–21 threads the bilayer; the sequence is MGGFTSIWHWVIVLLVIVLLF. The disordered stretch occupies residues 48 to 79; sequence EEEAKNEPKTLDAQVTQAKVHESSEIKNKQEG. The span at 66 to 79 shows a compositional bias: basic and acidic residues; sequence KVHESSEIKNKQEG.

This sequence belongs to the TatA/E family. As to quaternary structure, the Tat system comprises two distinct complexes: a TatABC complex, containing multiple copies of TatA, TatB and TatC subunits, and a separate TatA complex, containing only TatA subunits. Substrates initially bind to the TatABC complex, which probably triggers association of the separate TatA complex to form the active translocon.

The protein resides in the cell inner membrane. Part of the twin-arginine translocation (Tat) system that transports large folded proteins containing a characteristic twin-arginine motif in their signal peptide across membranes. TatA could form the protein-conducting channel of the Tat system. The polypeptide is Sec-independent protein translocase protein TatA (Helicobacter acinonychis (strain Sheeba)).